A 121-amino-acid chain; its full sequence is Large ribosomal subunit protein eL18 (121 aa).

Belongs to the eukaryotic ribosomal protein eL18 family.

In Methanosphaerula palustris (strain ATCC BAA-1556 / DSM 19958 / E1-9c), this protein is Large ribosomal subunit protein eL18.